The following is a 608-amino-acid chain: Albumin 1 (608 aa).

An N-terminal signal peptide occupies residues 1–14 (MQWLSVCSLLVLLS). A propeptide spanning residues 15–18 (VLSR) is cleaved from the precursor. Albumin domains lie at 19-205 (SQAQ…TFQH), 206-398 (AVMK…AGSD), and 402-600 (KITD…KLVS). Intrachain disulfides connect C26/C72, C71/C80, C93/C108, C107/C118, C142/C187, C186/C195, C218/C264, C263/C271, C283/C299, C298/C309, C336/C381, C380/C389, C414/C460, C459/C471, C484/C500, C499/C510, C537/C582, and C581/C590. An N-linked (GlcNAc...) asparagine glycan is attached at N501.

The protein belongs to the ALB/AFP/VDB family. As to expression, plasma.

It localises to the secreted. Its function is as follows. Binds water, Ca(2+), Na(+), K(+), fatty acids, hormones, bilirubin and drugs. Its main function is the regulation of the colloidal osmotic pressure of blood. The chain is Albumin 1 (alb1) from Salmo salar (Atlantic salmon).